The following is a 165-amino-acid chain: Large ribosomal subunit protein uL10 (165 aa).

This sequence belongs to the universal ribosomal protein uL10 family. Part of the ribosomal stalk of the 50S ribosomal subunit. The N-terminus interacts with L11 and the large rRNA to form the base of the stalk. The C-terminus forms an elongated spine to which L12 dimers bind in a sequential fashion forming a multimeric L10(L12)X complex.

Forms part of the ribosomal stalk, playing a central role in the interaction of the ribosome with GTP-bound translation factors. This is Large ribosomal subunit protein uL10 from Serratia proteamaculans (strain 568).